The primary structure comprises 457 residues: Nuclear hormone receptor family member nhr-20 (457 aa).

Residues 16-92 (TSKCLVCEHP…AGMRRECVQK (77 aa)) constitute a DNA-binding region (nuclear receptor). 2 NR C4-type zinc fingers span residues 19-40 (CLVC…CLAC) and 56-80 (CKKD…FDKC). The interval 125–182 (GDQTDDNSPLSIEKKSPPGLLPNDSPMMADFKFDPSDIPSTSGGSTQRLERSPSPKLA) is disordered. A compositionally biased stretch (polar residues) spans 162–171 (IPSTSGGSTQ). Positions 201–457 (QLKNSMDRRR…DALSKSLLTL (257 aa)) constitute an NR LBD domain.

It belongs to the nuclear hormone receptor family.

The protein localises to the nucleus. Its function is as follows. Orphan nuclear receptor. In Caenorhabditis elegans, this protein is Nuclear hormone receptor family member nhr-20 (nhr-20).